A 264-amino-acid polypeptide reads, in one-letter code: NAD-capped RNA hydrolase NudC (264 aa).

Substrate is bound at residue arginine 70. Residues cysteine 99 and cysteine 102 each coordinate Zn(2+). Glutamate 112 contributes to the substrate binding site. Zn(2+)-binding residues include cysteine 117 and cysteine 122. Tyrosine 127 provides a ligand contact to substrate. One can recognise a Nudix hydrolase domain in the interval 128 to 257; it reads PVICPSIIVA…TIALKLINAT (130 aa). Positions 166, 182, and 186 each coordinate a divalent metal cation. A Nudix box motif is present at residues 167 to 188; sequence GFVEIGESFEQTVEREVFEETG. 200-207 contacts substrate; sequence QPWAFPNS. A divalent metal cation is bound at residue glutamate 227. Alanine 250 lines the substrate pocket.

It belongs to the Nudix hydrolase family. NudC subfamily. In terms of assembly, homodimer. Requires Mg(2+) as cofactor. It depends on Mn(2+) as a cofactor. Zn(2+) is required as a cofactor.

It catalyses the reaction a 5'-end NAD(+)-phospho-ribonucleoside in mRNA + H2O = a 5'-end phospho-adenosine-phospho-ribonucleoside in mRNA + beta-nicotinamide D-ribonucleotide + 2 H(+). The enzyme catalyses NAD(+) + H2O = beta-nicotinamide D-ribonucleotide + AMP + 2 H(+). The catalysed reaction is NADH + H2O = reduced beta-nicotinamide D-ribonucleotide + AMP + 2 H(+). MRNA decapping enzyme that specifically removes the nicotinamide adenine dinucleotide (NAD) cap from a subset of mRNAs by hydrolyzing the diphosphate linkage to produce nicotinamide mononucleotide (NMN) and 5' monophosphate mRNA. The NAD-cap is present at the 5'-end of some mRNAs and stabilizes RNA against 5'-processing. Has preference for mRNAs with a 5'-end purine. Catalyzes the hydrolysis of a broad range of dinucleotide pyrophosphates. This is NAD-capped RNA hydrolase NudC from Actinobacillus succinogenes (strain ATCC 55618 / DSM 22257 / CCUG 43843 / 130Z).